A 394-amino-acid polypeptide reads, in one-letter code: ATP phosphoribosyltransferase regulatory subunit (394 aa).

This sequence belongs to the class-II aminoacyl-tRNA synthetase family. HisZ subfamily. Heteromultimer composed of HisG and HisZ subunits.

Its subcellular location is the cytoplasm. It participates in amino-acid biosynthesis; L-histidine biosynthesis; L-histidine from 5-phospho-alpha-D-ribose 1-diphosphate: step 1/9. Required for the first step of histidine biosynthesis. May allow the feedback regulation of ATP phosphoribosyltransferase activity by histidine. This chain is ATP phosphoribosyltransferase regulatory subunit, found in Geobacillus thermodenitrificans (strain NG80-2).